The following is a 715-amino-acid chain: Dynein axonemal intermediate chain 7 (715 aa).

The disordered stretch occupies residues 291-322 (AVSKDLQEENKQENESNSVHEEETKAEGQGDV). Positions 295 to 318 (DLQEENKQENESNSVHEEETKAEG) are enriched in basic and acidic residues.

It belongs to the DNAI7 family. In terms of assembly, part of the multisubunit axonemal dynein complex formed at least of two heavy chains and a number of intermediate and light chains. Associates with tubulin. Interacts with microtubule. In terms of processing, ubiquitinated. Ubiquitination leads to its degradation through the 26S proteasome. Ubiquitin-proteasome-mediated DNAI7 degradation occurs in mitosis.

The protein localises to the cell projection. The protein resides in the cilium. It localises to the cytoplasm. Via its association with the multisubunit axonemal dynein complex, is potentially involved in the regulation of cilia function. May act as a cell cycle regulator. This is Dynein axonemal intermediate chain 7 from Bos taurus (Bovine).